Consider the following 124-residue polypeptide: MKLLVVDDSSTMRRIIKNTLSRLGYEDVLEAEHGVEAWEKLDANADTKVLITDWNMPEMNGLDLVKKVRADNRFKEIPIIMITTEGGKAEVITALKAGVNNYIVKPFTPQVLKEKLEVVLGTND.

The Response regulatory domain occupies 2 to 120 (KLLVVDDSST…VLKEKLEVVL (119 aa)). The Mg(2+) site is built by Asp7, Asp8, Asp53, and Asn55. Asp53 is subject to 4-aspartylphosphate.

As to quaternary structure, interacts (when phosphorylated) with FliM. Requires Mg(2+) as cofactor. Phosphorylated by CheAY. Dephosphorylated (inactivated) by CheZ.

Its subcellular location is the cytoplasm. Its function is as follows. Chemotactic response regulator protein that modulates the rotation direction of bacterial flagellar motors. Plays an important role in the colonization and infection of Helicobacter pylori. Upon phosphorylation by CheA, interacts with the flagellar motor protein FliM to cause clockwise flagellar rotation and bacterial reversals, as opposed to straight swimming when CheY1 is not phosphorylated. The sequence is that of Chemotaxis protein CheY1 (cheY1) from Helicobacter pylori (strain J99 / ATCC 700824) (Campylobacter pylori J99).